Here is a 705-residue protein sequence, read N- to C-terminus: Bifunctional arginine dihydrolase/ornithine cyclodeaminase ArgZ (705 aa).

An arginine dihydrolase region spans residues 10–269 (CPPDHYDVDY…GAAKCLTLRV (260 aa)). N22, N71, R90, R139, H168, D170, A258, and C264 together coordinate L-arginine. L-ornithine-binding residues include N22, N71, R90, R139, and H168. The active-site Proton donor/acceptor is H168. Residues A258 and C264 each contribute to the L-ornithine site. Residue C264 is the Nucleophile of the active site. Residues 285–695 (SRVIRMEGHL…SLLVRQLQQL (411 aa)) form an ornithine cyclodeaminase region. NAD(+) is bound by residues N525, A526, D604, S636, M637, L638, H639, D657, D680, and V681.

It in the N-terminal section; belongs to the DDAH family. In the C-terminal section; belongs to the AgrE/ArgZ ornithine cyclodeaminase family. Homotetramer. It depends on NAD(+) as a cofactor.

The enzyme catalyses L-arginine + 2 H2O + 2 H(+) = L-ornithine + 2 NH4(+) + CO2. It carries out the reaction L-ornithine = L-proline + NH4(+). With respect to regulation, arginine dihydrolase activity does not require a metal cofactor. Functionally, bifunctional enzyme involved in a cyanobacterial arginine utilization pathway that enables cellular adaptation to nitrogen fluctuations. Catalyzes the hydrolysis of arginine to ornithine, with the release of ammonia and carbon dioxide. Then, probably catalyzes the conversion of ornithine to proline, with the release of ammonia. Is highly specific for arginine and cannot hydrolyze citrulline, dimethylarginine and other amino acids. This Synechocystis sp. (strain ATCC 27184 / PCC 6803 / Kazusa) protein is Bifunctional arginine dihydrolase/ornithine cyclodeaminase ArgZ.